A 116-amino-acid polypeptide reads, in one-letter code: MNNIIKMLNDEQMKQDVPEFGAGDTVVVKVRVVEGGKERLQAFEGVVIAKRNRGLHSAFTVRKISNGEGVERAFQTHSPLISSIEVKRRGRVRRAKLYYLRERSGKSARIREKLAK.

This sequence belongs to the bacterial ribosomal protein bL19 family.

In terms of biological role, this protein is located at the 30S-50S ribosomal subunit interface and may play a role in the structure and function of the aminoacyl-tRNA binding site. In Shewanella loihica (strain ATCC BAA-1088 / PV-4), this protein is Large ribosomal subunit protein bL19.